We begin with the raw amino-acid sequence, 221 residues long: Ethylene-inducing xylanase 4 (221 aa).

The signal sequence occupies residues 1 to 19; the sequence is MVSFSTLLTACTAITGALG. One can recognise a GH11 domain in the interval 28–218; that stretch reads NVTPNAQGTH…SAGRASVVVE (191 aa). Residue asparagine 96 is glycosylated (N-linked (GlcNAc...) asparagine). Glutamate 114 functions as the Nucleophile in the catalytic mechanism. Glutamate 205 acts as the Proton donor in catalysis.

Belongs to the glycosyl hydrolase 11 (cellulase G) family.

The catalysed reaction is Endohydrolysis of (1-&gt;4)-beta-D-xylosidic linkages in xylans.. Its pathway is glycan degradation; xylan degradation. Its function is as follows. Endo-1,4-beta-xylanase involved in the hydrolysis of xylan, a major structural heterogeneous polysaccharide found in plant biomass representing the second most abundant polysaccharide in the biosphere, after cellulose. May act as an elicitor of plant defense responses in certain plants but does not exhibit any cell death when transiently expressed in N.benthamiana. The chain is Ethylene-inducing xylanase 4 from Verticillium dahliae (strain VdLs.17 / ATCC MYA-4575 / FGSC 10137) (Verticillium wilt).